Here is a 430-residue protein sequence, read N- to C-terminus: Oleandomycin glycosyltransferase (430 aa).

Residues 385 to 430 (GGTRRAADLIEAELPARHERQEPVGDRPNVGDRPAGVRSDRQRSAL) form a disordered region. Basic and acidic residues predominate over residues 386-409 (GTRRAADLIEAELPARHERQEPVG).

This sequence belongs to the UDP-glycosyltransferase family.

Its function is as follows. Specifically inactivates oleandomycin via 2'-O-glycosylation using UDP-glucose. The sequence is that of Oleandomycin glycosyltransferase (oleD) from Streptomyces antibioticus.